Reading from the N-terminus, the 142-residue chain is Nucleoside diphosphate kinase (142 aa).

Residues Lys-11, Phe-59, Arg-87, Thr-93, Arg-104, and Asn-114 each coordinate ATP. His-117 acts as the Pros-phosphohistidine intermediate in catalysis.

It belongs to the NDK family. In terms of assembly, homotetramer. Mg(2+) serves as cofactor.

It is found in the cytoplasm. The enzyme catalyses dZDP + ATP = dZTP + ADP. It carries out the reaction a 2'-deoxyribonucleoside 5'-diphosphate + ATP = a 2'-deoxyribonucleoside 5'-triphosphate + ADP. It catalyses the reaction a ribonucleoside 5'-diphosphate + ATP = a ribonucleoside 5'-triphosphate + ADP. The protein operates within purine metabolism. Its function is as follows. Major role in the synthesis of nucleoside triphosphates other than ATP. The ATP gamma phosphate is transferred to the NDP beta phosphate via a ping-pong mechanism, using a phosphorylated active-site intermediate. Functionally, (Microbial infection) Catalyzes the phosphorylation of dZDP to dZTP, when the bacterium is infected by a phage that produces the substrate for the synthesis of dZTP (2- amino-2'-deoxyadenosine 5'-triphosphate), which is then used by the phage as a DNA polymerase substrate. This chain is Nucleoside diphosphate kinase, found in Vibrio cholerae serotype O1 (strain ATCC 39315 / El Tor Inaba N16961).